The primary structure comprises 118 residues: Immunoglobulin heavy variable 4-31 (118 aa).

The N-terminal stretch at Met-1 to Ser-19 is a signal peptide. The tract at residues Gln-20–Ser-44 is framework-1. In terms of domain architecture, Ig-like spans Gln-20–Arg-118. Cys-41 and Cys-116 form a disulfide bridge. Residues Gly-45–Tyr-54 are complementarity-determining-1. The tract at residues Trp-55–Tyr-71 is framework-2. Positions Ile-72–Thr-78 are complementarity-determining-2. Residues Tyr-79 to Cys-116 are framework-3. The interval Ala-117 to Arg-118 is complementarity-determining-3.

Immunoglobulins are composed of two identical heavy chains and two identical light chains; disulfide-linked.

The protein resides in the secreted. Its subcellular location is the cell membrane. V region of the variable domain of immunoglobulin heavy chains that participates in the antigen recognition. Immunoglobulins, also known as antibodies, are membrane-bound or secreted glycoproteins produced by B lymphocytes. In the recognition phase of humoral immunity, the membrane-bound immunoglobulins serve as receptors which, upon binding of a specific antigen, trigger the clonal expansion and differentiation of B lymphocytes into immunoglobulins-secreting plasma cells. Secreted immunoglobulins mediate the effector phase of humoral immunity, which results in the elimination of bound antigens. The antigen binding site is formed by the variable domain of one heavy chain, together with that of its associated light chain. Thus, each immunoglobulin has two antigen binding sites with remarkable affinity for a particular antigen. The variable domains are assembled by a process called V-(D)-J rearrangement and can then be subjected to somatic hypermutations which, after exposure to antigen and selection, allow affinity maturation for a particular antigen. This Homo sapiens (Human) protein is Immunoglobulin heavy variable 4-31.